The sequence spans 91 residues: MAVKIRLTRLGSKRNPFYRIVVADARSPRDGRIIEQIGTYNPTSANAPEIKVDEALALKWLNDGAKPTDTVHNILSKEGIMKKFDEQKKAK.

Belongs to the bacterial ribosomal protein bS16 family.

The protein is Small ribosomal subunit protein bS16 of Staphylococcus aureus (strain Mu3 / ATCC 700698).